A 346-amino-acid chain; its full sequence is [LysW]-lysine/[LysW]-ornithine hydrolase (346 aa).

Residue H68 participates in Zn(2+) binding. Residue D70 is part of the active site. Position 92 (D92) interacts with Zn(2+). Catalysis depends on E122, which acts as the Proton acceptor. The Zn(2+) site is built by E123, E146, and H317.

The protein belongs to the peptidase M20A family. LysK subfamily. It depends on Zn(2+) as a cofactor. Requires Co(2+) as cofactor.

The protein resides in the cytoplasm. It catalyses the reaction [amino-group carrier protein]-C-terminal-gamma-(L-lysyl)-L-glutamate + H2O = [amino-group carrier protein]-C-terminal-L-glutamate + L-lysine. The catalysed reaction is [amino-group carrier protein]-C-terminal-gamma-(L-ornithyl)-L-glutamate + H2O = [amino-group carrier protein]-C-terminal-L-glutamate + L-ornithine. It functions in the pathway amino-acid biosynthesis; L-lysine biosynthesis via AAA pathway; L-lysine from L-alpha-aminoadipate (Thermus route): step 5/5. Its pathway is amino-acid biosynthesis; L-arginine biosynthesis. Catalyzes the release of L-lysine from [LysW]-gamma-L-lysine and the release of L-ornithine from [LysW]-L-ornithine. The sequence is that of [LysW]-lysine/[LysW]-ornithine hydrolase from Saccharolobus islandicus (strain Y.N.15.51 / Yellowstone #2) (Sulfolobus islandicus).